We begin with the raw amino-acid sequence, 383 residues long: Photosynthetic reaction center cytochrome c subunit (383 aa).

The signal sequence occupies residues 1–22 (MNLGKQLTLPAVAVVASVVLLG). A lipid anchor (N-palmitoyl cysteine) is attached at Cys23. Cys23 carries S-diacylglycerol cysteine lipidation. Positions 94, 107, 110, 111, 130, 144, 152, 155, 156, 236, 247, 250, 251, 307, 310, and 311 each coordinate heme. Residues 335–383 (PAEAAPATEEAPAAEAEAVEAAPVEEAAPAPVEQAAAPVEDAAPAPQQL) form a disordered region.

Component of the photosynthetic reaction center composed of protein subunits L (PufL), M (PufM), H (PuhA) and cytochrome C (PufC). The reaction center interacts with light-harvesting antenna complex LH1. Binds 4 heme groups per subunit.

The protein resides in the cellular chromatophore membrane. In terms of biological role, the reaction center of purple bacteria contains a tightly bound cytochrome molecule which re-reduces the photo oxidized primary electron donor. The polypeptide is Photosynthetic reaction center cytochrome c subunit (pufC) (Allochromatium vinosum (strain ATCC 17899 / DSM 180 / NBRC 103801 / NCIMB 10441 / D) (Chromatium vinosum)).